Reading from the N-terminus, the 151-residue chain is Probable cGMP 3',5'-cyclic phosphodiesterase subunit delta (151 aa).

This sequence belongs to the PDE6D/unc-119 family. Interacts with Pde6.

It is found in the nucleus. The protein localises to the cytoplasm. This chain is Probable cGMP 3',5'-cyclic phosphodiesterase subunit delta, found in Culex quinquefasciatus (Southern house mosquito).